A 108-amino-acid chain; its full sequence is DNA-binding protein HBbu (108 aa).

The protein belongs to the bacterial histone-like protein family.

In terms of biological role, histone-like DNA-binding protein which is capable of wrapping DNA to stabilize it, and thus to prevent its denaturation under extreme environmental conditions. This chain is DNA-binding protein HBbu (hbb), found in Borrelia turicatae.